Reading from the N-terminus, the 152-residue chain is Small ribosomal subunit protein bS6 (152 aa).

Residues 96–152 are disordered; that stretch reads HEEGPSAMLQKRDRDDRGPREGGDRGPRREFGDRPPRRDGDFQRGPRPDRAPREDRA.

This sequence belongs to the bacterial ribosomal protein bS6 family.

Functionally, binds together with bS18 to 16S ribosomal RNA. This Rhizobium etli (strain CIAT 652) protein is Small ribosomal subunit protein bS6.